The primary structure comprises 612 residues: uncharacterized protein (612 aa).

Its subcellular location is the plastid. The protein localises to the chloroplast. This is an uncharacterized protein from Pyropia yezoensis (Susabi-nori).